A 131-amino-acid chain; its full sequence is Small ribosomal subunit protein uS11 (131 aa).

The protein belongs to the universal ribosomal protein uS11 family. Part of the 30S ribosomal subunit. Interacts with proteins S7 and S18. Binds to IF-3.

Functionally, located on the platform of the 30S subunit, it bridges several disparate RNA helices of the 16S rRNA. Forms part of the Shine-Dalgarno cleft in the 70S ribosome. The chain is Small ribosomal subunit protein uS11 from Chromobacterium violaceum (strain ATCC 12472 / DSM 30191 / JCM 1249 / CCUG 213 / NBRC 12614 / NCIMB 9131 / NCTC 9757 / MK).